A 408-amino-acid chain; its full sequence is Diguanylate cyclase DgcN (408 aa).

The Cytoplasmic segment spans residues Met1 to Thr24. The helical transmembrane segment at Ser25 to Leu45 threads the bilayer. Over Lys46 to Asn52 the chain is Periplasmic. The chain crosses the membrane as a helical span at residues Leu53 to Gly73. Over Pro74–Pro112 the chain is Cytoplasmic. Residues Gly113–Ile133 form a helical membrane-spanning segment. At Arg134 to His154 the chain is on the periplasmic side. Residues Phe155 to Ile175 traverse the membrane as a helical segment. Residues Thr176–Arg408 lie on the Cytoplasmic side of the membrane. The HAMP domain occupies Asn183–Leu236. A GGDEF domain is found at Lys278–Arg408. Asp286 lines the Mg(2+) pocket. Substrate contacts are provided by Asn294, His299, and Asp303. Asp329 contributes to the Mg(2+) binding site. Residue Asp329 is the Proton acceptor of the active site.

In terms of assembly, homodimer. Interacts with the cell division proteins FtsZ and ZipA. Mg(2+) serves as cofactor.

The protein resides in the cell inner membrane. It carries out the reaction 2 GTP = 3',3'-c-di-GMP + 2 diphosphate. It participates in purine metabolism; 3',5'-cyclic di-GMP biosynthesis. Inhibited by YfiR, which prevents relocation to the midcell. A reductive stress signal is required to inactivate YfiR and turn on the DGC activity of DgcN. Its function is as follows. Bifunctional protein that catalyzes the synthesis of cyclic-di-GMP (c-di-GMP) in response to reductive stress and then dynamically relocates to the division site to arrest cell division in response to envelope stress. In the presence of high intracellular c-di-GMP levels, and in response to envelope stress, interacts with cell division proteins and halts cell division, without disassembling the Z ring, but by blocking its further progress toward cytokinesis. Part of a network that regulates cell motility by altering levels of c-di-GMP. This chain is Diguanylate cyclase DgcN, found in Escherichia coli (strain K12).